Consider the following 184-residue polypeptide: Large ribosomal subunit protein eL13 (184 aa).

Residues 28–53 form a disordered region; sequence PARKERRRQARKAKAQRIAPRPASGP. Over residues 31–42 the composition is skewed to basic residues; sequence KERRRQARKAKA.

It belongs to the eukaryotic ribosomal protein eL13 family.

This is Large ribosomal subunit protein eL13 (RPL13) from Schistosoma mansoni (Blood fluke).